The chain runs to 261 residues: uncharacterized protein (261 aa).

The interval 1–22 (MGVADNEYISVPTGEPVQQQPQ) is disordered. 3 helical membrane-spanning segments follow: residues 92–112 (IIIL…ILGL), 122–142 (IVVM…IFLF), and 147–167 (INTI…LMNY).

Its subcellular location is the membrane. This is an uncharacterized protein from Dictyostelium discoideum (Social amoeba).